The chain runs to 210 residues: Synaptosomal-associated protein 23 (210 aa).

Met1 is modified (N-acetylmethionine). Residues Ser5, Ser20, Ser23, and Ser34 each carry the phosphoserine modification. Residues His14–Leu76 form the t-SNARE coiled-coil homology 1 domain. Positions Ser23–Leu76 form a coiled coil. S-palmitoyl cysteine attachment occurs at residues Cys79, Cys80, Cys83, Cys85, and Cys87. The interval Gly104–Gly136 is disordered. Polar residues predominate over residues Ser109 to Ala133. Phosphoserine is present on residues Ser110 and Ser160. The region spanning Asp145–Leu207 is the t-SNARE coiled-coil homology 2 domain.

The protein belongs to the SNAP-25 family. In terms of assembly, homotetramer (via coiled-coil domain), also forms heterotetramers with STX4 and VAMP3. Found in a complex with VAMP8 and STX1A. Found in a complex with VAMP8 and STX4 in pancreas. Interacts simultaneously with SNAPIN and SYN4. Interacts with STX1A. Interacts with STX12. Interacts tightly to multiple syntaxins and synaptobrevins/VAMPs. Interacts with ZDHHC13 (via ANK repeats). Interacts with ZDHHC17 (via ANK repeats).

It is found in the cell membrane. The protein localises to the synapse. The protein resides in the synaptosome. Its subcellular location is the cytoplasmic vesicle membrane. Its function is as follows. Essential component of the high affinity receptor for the general membrane fusion machinery and an important regulator of transport vesicle docking and fusion. This Rattus norvegicus (Rat) protein is Synaptosomal-associated protein 23 (Snap23).